The sequence spans 217 residues: Small ribosomal subunit protein uS3 (217 aa).

The 70-residue stretch at 24–93 (IKEFLEYKLS…NPQIDVIDVS (70 aa)) folds into the KH type-2 domain.

Belongs to the universal ribosomal protein uS3 family. As to quaternary structure, part of the 30S ribosomal subunit.

In terms of biological role, binds the lower part of the 30S subunit head. In Pyrobaculum islandicum (strain DSM 4184 / JCM 9189 / GEO3), this protein is Small ribosomal subunit protein uS3.